A 216-amino-acid chain; its full sequence is Thiopurine S-methyltransferase (216 aa).

Positions 10, 45, 66, and 123 each coordinate S-adenosyl-L-methionine.

This sequence belongs to the class I-like SAM-binding methyltransferase superfamily. TPMT family.

It localises to the cytoplasm. The catalysed reaction is S-adenosyl-L-methionine + a thiopurine = S-adenosyl-L-homocysteine + a thiopurine S-methylether.. The protein is Thiopurine S-methyltransferase of Pseudomonas putida (strain GB-1).